We begin with the raw amino-acid sequence, 807 residues long: Dynein axonemal intermediate chain 4 (807 aa).

2 stretches are compositionally biased toward polar residues: residues 1-11 and 22-31; these read MHSSPTSTRKQ and PRKSISFINP. 2 disordered regions span residues 1–44 and 300–320; these read MHSS…AASN and YSSK…DSES. Over residues 32–43 the composition is skewed to low complexity; it reads SKSSAGKGYAAS. Residues 308–317 show a composition bias toward basic and acidic residues; it reads AKDRDPKIQD. 6 WD repeats span residues 493 to 533, 542 to 590, 617 to 657, 661 to 701, 704 to 743, and 749 to 788; these read QSSY…NIPV, KHLG…DCHD, SRQA…QYLE, GHKG…PFLS, PTTY…LDPL, and NPGI…TASD.

As to quaternary structure, part of the multisubunit axonemal dynein complex formed at least of two heavy chains and a number of intermediate and light chains. Associated with axonemal dynein subunits such as, DNAH2, DNAI3, and DYNLT1. Interacts with DYNLT1. As to expression, highly expressed in tissues containing motile cilia, including the trachea, lung, oviduct, and testis.

It is found in the cytoplasm. It localises to the cytoskeleton. The protein resides in the flagellum axoneme. Its subcellular location is the cilium axoneme. The protein localises to the dynein axonemal particle. Plays a critical role in the assembly of axonemal dynein complex, thereby playing a role in ciliary motility. This chain is Dynein axonemal intermediate chain 4 (Dnai4), found in Mus musculus (Mouse).